A 390-amino-acid polypeptide reads, in one-letter code: Bifunctional enzyme IspD/IspF (390 aa).

The tract at residues 1-229 (MAAGRGERAG…RQDHAVFPDI (229 aa)) is 2-C-methyl-D-erythritol 4-phosphate cytidylyltransferase. Residues 230–390 (RTGNGYDVHS…TVIYPGEVPE (161 aa)) form a 2-C-methyl-D-erythritol 2,4-cyclodiphosphate synthase region. A divalent metal cation-binding residues include aspartate 236 and histidine 238. 4-CDP-2-C-methyl-D-erythritol 2-phosphate contacts are provided by residues 236 to 238 (DVH) and 262 to 263 (HS). A divalent metal cation is bound at residue histidine 270. Residues 284–286 (DIG), 360–363 (TTNE), phenylalanine 367, and arginine 370 each bind 4-CDP-2-C-methyl-D-erythritol 2-phosphate.

This sequence in the N-terminal section; belongs to the IspD/TarI cytidylyltransferase family. IspD subfamily. It in the C-terminal section; belongs to the IspF family. Requires a divalent metal cation as cofactor.

The enzyme catalyses 2-C-methyl-D-erythritol 4-phosphate + CTP + H(+) = 4-CDP-2-C-methyl-D-erythritol + diphosphate. It carries out the reaction 4-CDP-2-C-methyl-D-erythritol 2-phosphate = 2-C-methyl-D-erythritol 2,4-cyclic diphosphate + CMP. It participates in isoprenoid biosynthesis; isopentenyl diphosphate biosynthesis via DXP pathway; isopentenyl diphosphate from 1-deoxy-D-xylulose 5-phosphate: step 2/6. Its pathway is isoprenoid biosynthesis; isopentenyl diphosphate biosynthesis via DXP pathway; isopentenyl diphosphate from 1-deoxy-D-xylulose 5-phosphate: step 4/6. Functionally, bifunctional enzyme that catalyzes the formation of 4-diphosphocytidyl-2-C-methyl-D-erythritol from CTP and 2-C-methyl-D-erythritol 4-phosphate (MEP) (IspD), and catalyzes the conversion of 4-diphosphocytidyl-2-C-methyl-D-erythritol 2-phosphate (CDP-ME2P) to 2-C-methyl-D-erythritol 2,4-cyclodiphosphate (ME-CPP) with a corresponding release of cytidine 5-monophosphate (CMP) (IspF). The chain is Bifunctional enzyme IspD/IspF from Brucella abortus biovar 1 (strain 9-941).